The primary structure comprises 199 residues: dTTP/UTP pyrophosphatase (199 aa).

The active-site Proton acceptor is Asp-75.

Belongs to the Maf family. YhdE subfamily. It depends on a divalent metal cation as a cofactor.

It localises to the cytoplasm. It carries out the reaction dTTP + H2O = dTMP + diphosphate + H(+). The enzyme catalyses UTP + H2O = UMP + diphosphate + H(+). Nucleoside triphosphate pyrophosphatase that hydrolyzes dTTP and UTP. May have a dual role in cell division arrest and in preventing the incorporation of modified nucleotides into cellular nucleic acids. This is dTTP/UTP pyrophosphatase from Methylobacillus flagellatus (strain ATCC 51484 / DSM 6875 / VKM B-1610 / KT).